A 510-amino-acid chain; its full sequence is Gallate 1-beta-glucosyltransferase (510 aa).

His-19 acts as the Proton acceptor in catalysis. His-19 lines the an anthocyanidin pocket. UDP-alpha-D-glucose-binding residues include Gln-343, His-358, Trp-361, Asn-362, Ser-363, and Glu-366. Gly-381 is a binding site for an anthocyanidin. Asp-382 and Gln-383 together coordinate UDP-alpha-D-glucose.

This sequence belongs to the UDP-glycosyltransferase family. As to expression, expressed in swelling buds and young leaves.

It carries out the reaction 3,4,5-trihydroxybenzoate + UDP-alpha-D-glucose = 1-O-galloyl-beta-D-glucose + UDP. The catalysed reaction is vanillate + UDP-alpha-D-glucose = 1-O-(4-hydroxy-3-methoxybenzoyl)-beta-D-glucose + UDP. It catalyses the reaction 3,4-dihydroxybenzoate + UDP-alpha-D-glucose = 1-O-(3,4-dihydroxy-benzoyl)-beta-D-glucose + UDP. Its function is as follows. Glucosyltransferase that catalyzes the formation of 1-O-beta-D-glucose esters with hydroxybenzoic acids as preferred glucosyl acceptors. Has the highest activity with 3,4-dihydroxybenzoate, vanillate and gallate in vitro. Gallate is the predicted native substrate of the enzyme, which thus catalyzes the formation of 1-O-galloyl-beta-D-glucose, the first committed step of gallotannin biosynthesis. The polypeptide is Gallate 1-beta-glucosyltransferase (Quercus robur (English oak)).